Reading from the N-terminus, the 298-residue chain is UDP-N-acetylenolpyruvoylglucosamine reductase (298 aa).

An FAD-binding PCMH-type domain is found at 26–191 (KTGGAADVFV…LDATFSLALE (166 aa)). Residue R170 is part of the active site. S220 functions as the Proton donor in the catalytic mechanism. The active site involves E290.

It belongs to the MurB family. FAD is required as a cofactor.

It is found in the cytoplasm. The enzyme catalyses UDP-N-acetyl-alpha-D-muramate + NADP(+) = UDP-N-acetyl-3-O-(1-carboxyvinyl)-alpha-D-glucosamine + NADPH + H(+). It participates in cell wall biogenesis; peptidoglycan biosynthesis. Functionally, cell wall formation. The polypeptide is UDP-N-acetylenolpyruvoylglucosamine reductase (Listeria monocytogenes serovar 1/2a (strain ATCC BAA-679 / EGD-e)).